The chain runs to 129 residues: Mediator of RNA polymerase II transcription subunit 31-B (129 aa).

Belongs to the Mediator complex subunit 31 family. Component of the Mediator complex.

The protein localises to the nucleus. Component of the Mediator complex, a coactivator involved in the regulated transcription of nearly all RNA polymerase II-dependent genes. Mediator functions as a bridge to convey information from gene-specific regulatory proteins to the basal RNA polymerase II transcription machinery. Mediator is recruited to promoters by direct interactions with regulatory proteins and serves as a scaffold for the assembly of a functional preinitiation complex with RNA polymerase II and the general transcription factors. The sequence is that of Mediator of RNA polymerase II transcription subunit 31-B (med31-b) from Xenopus laevis (African clawed frog).